A 207-amino-acid chain; its full sequence is Ras-related protein Rab-8B (207 aa).

10 residues coordinate GTP: serine 17, glycine 18, valine 19, glycine 20, lysine 21, threonine 22, cysteine 23, threonine 35, serine 39, and threonine 40. Residue threonine 22 coordinates Mg(2+). 2 consecutive short sequence motifs (switch) follow at residues 31–45 (DAFNTTFISTIGIDF) and 63–80 (DTAGQERFRTITTAYYRG). Residues threonine 40 and aspartate 63 each contribute to the Mg(2+) site. Glycine 66 is a binding site for GTP. A Phosphothreonine modification is found at threonine 72. GTP-binding residues include asparagine 121, lysine 122, aspartate 124, alanine 152, and lysine 153. 2 positions are modified to phosphoserine: serine 180 and serine 183. The residue at position 204 (cysteine 204) is a Cysteine methyl ester. Cysteine 204 carries the S-geranylgeranyl cysteine lipid modification. Residues 205 to 207 (LLL) constitute a propeptide, removed in mature form.

This sequence belongs to the small GTPase superfamily. Rab family. In terms of assembly, associated with actin, delta-catenin and alpha and beta tubulins. Interacts with OTOF. Interacts with PEX5R. Interacts with RAB3IP. Interacts with VIM. Interacts with CDH1. Interacts with MICALL2. Interacts with GDI1, GDI2, CHML and CHM; phosphorylation at Thr-72 disrupts these interactions. Interacts with MICAL1. Mg(2+) serves as cofactor. In terms of processing, phosphorylation of Thr-72 in the switch II region by LRRK2 prevents the association of RAB regulatory proteins, including CHM, CHML and RAB GDP dissociation inhibitors GDI1 and GDI2.

Its subcellular location is the cell membrane. The protein resides in the cytoplasmic vesicle. It is found in the phagosome membrane. The protein localises to the endosome membrane. It catalyses the reaction GTP + H2O = GDP + phosphate + H(+). Its activity is regulated as follows. Regulated by guanine nucleotide exchange factors (GEFs) including RAB3IP/RABIN8 which promotes the exchange of bound GDP for free GTP. Regulated by GTPase activating proteins (GAPs) which increase the GTP hydrolysis activity. Inhibited by GDP dissociation inhibitors (GDIs). Its function is as follows. The small GTPases Rab are key regulators of intracellular membrane trafficking, from the formation of transport vesicles to their fusion with membranes. Rabs cycle between an inactive GDP-bound form and an active GTP-bound form that is able to recruit to membranes different sets of downstream effectors directly responsible for vesicle formation, movement, tethering and fusion. RAB8B may be involved in polarized vesicular trafficking and neurotransmitter release. May participate in cell junction dynamics in Sertoli cells. May also participate in the export of a subset of neosynthesized proteins through a Rab8-Rab10-Rab11-dependent endososomal export route. In Bos taurus (Bovine), this protein is Ras-related protein Rab-8B (RAB8B).